Consider the following 355-residue polypeptide: Probable nitronate monooxygenase (355 aa).

FMN-binding positions include N71, Q175, G180, G218, and 237–240; that span reads QMGT.

The protein belongs to the nitronate monooxygenase family. NMO class I subfamily. Requires FMN as cofactor.

The enzyme catalyses 3 propionate 3-nitronate + 3 O2 + H2O = 3 3-oxopropanoate + 2 nitrate + nitrite + H2O2 + 3 H(+). In terms of biological role, nitronate monooxygenase that uses molecular oxygen to catalyze the oxidative denitrification of alkyl nitronates. Acts on propionate 3-nitronate (P3N), the presumed physiological substrate. Probably functions in the detoxification of P3N, a metabolic poison produced by plants and fungi as a defense mechanism. The protein is Probable nitronate monooxygenase of Staphylococcus aureus (strain MSSA476).